The sequence spans 782 residues: uncharacterized protein (782 aa).

3 disordered regions span residues methionine 1–lysine 127, asparagine 205–proline 234, and proline 308–arginine 355. Residues lysine 24–methionine 54 are compositionally biased toward basic and acidic residues. Over residues lysine 82–lysine 118 the composition is skewed to low complexity. The segment covering alanine 312–methionine 324 has biased composition (polar residues). A compositionally biased stretch (basic and acidic residues) spans asparagine 326 to arginine 336. The span at serine 337–asparagine 346 shows a compositional bias: polar residues. Residues methionine 361 to leucine 628 adopt a coiled-coil conformation. A compositionally biased stretch (basic and acidic residues) spans glycine 629–serine 668. The disordered stretch occupies residues glycine 629 to glycine 689. The span at arginine 669–arginine 678 shows a compositional bias: basic residues. Residues arginine 679–glycine 689 are compositionally biased toward basic and acidic residues.

This is an uncharacterized protein from Yarrowia lipolytica (strain CLIB 122 / E 150) (Yeast).